The chain runs to 1372 residues: DNA-directed RNA polymerase subunit beta' (1372 aa).

Positions 69, 71, 84, and 87 each coordinate Zn(2+). Mg(2+) is bound by residues aspartate 460, aspartate 462, and aspartate 464. Positions 808, 882, 889, and 892 each coordinate Zn(2+).

Belongs to the RNA polymerase beta' chain family. In terms of assembly, the RNAP catalytic core consists of 2 alpha, 1 beta, 1 beta' and 1 omega subunit. When a sigma factor is associated with the core the holoenzyme is formed, which can initiate transcription. Mg(2+) is required as a cofactor. The cofactor is Zn(2+).

The enzyme catalyses RNA(n) + a ribonucleoside 5'-triphosphate = RNA(n+1) + diphosphate. DNA-dependent RNA polymerase catalyzes the transcription of DNA into RNA using the four ribonucleoside triphosphates as substrates. This is DNA-directed RNA polymerase subunit beta' from Rickettsia conorii (strain ATCC VR-613 / Malish 7).